Reading from the N-terminus, the 404-residue chain is Sodium/glutamate symporter (404 aa).

The next 11 membrane-spanning stretches (helical) occupy residues 5 to 25, 33 to 53, 69 to 89, 95 to 115, 161 to 181, 219 to 239, 245 to 265, 277 to 297, 307 to 327, 338 to 358, and 373 to 393; these read FSTY…YFLV, TFNI…LLIW, TTMM…SRLI, LVVF…IGIA, IAIA…GPVA, SLIE…YLDV, ALQL…RNIL, AIDV…LMSL, IDVL…AIFI, AVVL…TAIA, and AFLI…AALL.

This sequence belongs to the glutamate:Na(+) symporter (ESS) (TC 2.A.27) family.

The protein localises to the cell inner membrane. In terms of biological role, catalyzes the sodium-dependent transport of glutamate. The protein is Sodium/glutamate symporter of Haemophilus influenzae (strain ATCC 51907 / DSM 11121 / KW20 / Rd).